The following is a 256-amino-acid chain: Small ribosomal subunit protein eS1 (256 aa).

A2 bears the N-acetylalanine; partial mark.

Belongs to the eukaryotic ribosomal protein eS1 family. Component of the small ribosomal subunit. Mature ribosomes consist of a small (40S) and a large (60S) subunit. The 40S subunit contains about 33 different proteins and 1 molecule of RNA (18S). The 60S subunit contains about 49 different proteins and 3 molecules of RNA (25S, 5.8S and 5S).

The protein localises to the cytoplasm. This chain is Small ribosomal subunit protein eS1, found in Lachancea thermotolerans (strain ATCC 56472 / CBS 6340 / NRRL Y-8284) (Yeast).